The following is a 338-amino-acid chain: Ornithine carbamoyltransferase (338 aa).

Carbamoyl phosphate is bound by residues 56–59, R107, and 134–137; these read STRT and HPTQ. L-ornithine contacts are provided by residues N168, D232, and 236–237; that span reads SM. Carbamoyl phosphate contacts are provided by residues 274–275 and R320; that span reads CL.

It belongs to the aspartate/ornithine carbamoyltransferase superfamily. OTCase family.

The protein resides in the cytoplasm. It carries out the reaction carbamoyl phosphate + L-ornithine = L-citrulline + phosphate + H(+). Its pathway is amino-acid biosynthesis; L-arginine biosynthesis; L-arginine from L-ornithine and carbamoyl phosphate: step 1/3. Its function is as follows. Reversibly catalyzes the transfer of the carbamoyl group from carbamoyl phosphate (CP) to the N(epsilon) atom of ornithine (ORN) to produce L-citrulline. This is Ornithine carbamoyltransferase (argI) from Buchnera aphidicola subsp. Schizaphis graminum (strain Sg).